The sequence spans 121 residues: Dihydroneopterin aldolase (121 aa).

Residues glutamate 25 and methionine 114 each contribute to the substrate site.

This sequence belongs to the archaeal dihydroneopterin aldolase family. In terms of assembly, homotetramer.

It catalyses the reaction 7,8-dihydroneopterin = 6-hydroxymethyl-7,8-dihydropterin + glycolaldehyde. It participates in cofactor biosynthesis; 5,6,7,8-tetrahydromethanopterin biosynthesis. Its function is as follows. Catalyzes the conversion of 7,8-dihydroneopterin (H2Neo) to 6-hydroxymethyl-7,8-dihydropterin (6-HMD). This is Dihydroneopterin aldolase from Methanocaldococcus jannaschii (strain ATCC 43067 / DSM 2661 / JAL-1 / JCM 10045 / NBRC 100440) (Methanococcus jannaschii).